Consider the following 226-residue polypeptide: Cytidylate kinase (226 aa).

10–18 provides a ligand contact to ATP; that stretch reads GPASSGKST.

The protein belongs to the cytidylate kinase family. Type 1 subfamily.

Its subcellular location is the cytoplasm. It catalyses the reaction CMP + ATP = CDP + ADP. The catalysed reaction is dCMP + ATP = dCDP + ADP. In Streptococcus pyogenes serotype M1, this protein is Cytidylate kinase.